A 662-amino-acid polypeptide reads, in one-letter code: Glutathione hydrolase 7 (662 aa).

Topologically, residues methionine 1–glycine 106 are cytoplasmic. Residues serine 17, serine 72, serine 79, and serine 83 each carry the phosphoserine modification. Residues serine 26–lysine 90 form a disordered region. Residues serine 72–serine 83 are compositionally biased toward low complexity. The chain crosses the membrane as a helical; Signal-anchor for type II membrane protein span at residues leucine 107–methionine 127. The Extracellular segment spans residues glutamine 128–leucine 662. N-linked (GlcNAc...) asparagine glycosylation is found at asparagine 198, asparagine 267, asparagine 283, asparagine 330, asparagine 353, asparagine 394, asparagine 519, asparagine 523, and asparagine 586.

This sequence belongs to the gamma-glutamyltransferase family. Heterodimer composed of the light and heavy chains. The active site is located in the light chain. In terms of processing, cleaved by autocatalysis into a large and a small subunit and the autocatalytic cleavage is essential to the functional activation of the enzyme.

Its subcellular location is the membrane. The catalysed reaction is an N-terminal (5-L-glutamyl)-[peptide] + an alpha-amino acid = 5-L-glutamyl amino acid + an N-terminal L-alpha-aminoacyl-[peptide]. It carries out the reaction glutathione + H2O = L-cysteinylglycine + L-glutamate. It catalyses the reaction an S-substituted glutathione + H2O = an S-substituted L-cysteinylglycine + L-glutamate. It functions in the pathway sulfur metabolism; glutathione metabolism. Hydrolyzes and transfers gamma-glutamyl moieties from glutathione and other gamma-glutamyl compounds to acceptors. The protein is Glutathione hydrolase 7 of Mus musculus (Mouse).